The primary structure comprises 789 residues: Ent-kaur-16-ene synthase, chloroplastic (789 aa).

Mg(2+) is bound by residues Asp536, Asp540, Asn680, Ser684, and Glu688. Positions 536–540 match the DDXXD motif motif; it reads DDFYD.

It belongs to the terpene synthase family. It depends on Mg(2+) as a cofactor. In terms of processing, the N-terminus is blocked. Abundant in most tissues. Present in low amounts in mature cotyledons.

The protein resides in the plastid. The protein localises to the chloroplast. The catalysed reaction is ent-copalyl diphosphate = ent-kaur-16-ene + diphosphate. It functions in the pathway plant hormone biosynthesis; gibberellin biosynthesis. Functionally, catalyzes the conversion of ent-copalyl diphosphate to the gibberellin precursor ent-kaur-16-ene. The sequence is that of Ent-kaur-16-ene synthase, chloroplastic from Cucurbita maxima (Pumpkin).